The chain runs to 267 residues: MLNTLWEIREKVRDLSPLVVNLTNNVVTNFTANVLLAAGASPIMSEGVEEADDLVKIANAVVINIGTLHSRQVEYFKKAVYLANKYQKPLLLDPVGLGATTYRNETTFELLNSGNFTLIRGNYGEISFLAGNSAQVKGVDSQTSDFAAENLTEVAKRYKTVVVATGPVDYVIAEGELYLNRTGDIMLQKVTGTGCALTSLIGAFVGVIDEPALAALAALAFYGAASEKARKISAGPGSFLVNFIDSLYNLTKEEFLELTTEKVQGLR.

Met44 is a substrate binding site. 2 residues coordinate ATP: Arg120 and Thr165. Gly192 is a substrate binding site.

It belongs to the Thz kinase family. It depends on Mg(2+) as a cofactor.

The catalysed reaction is 5-(2-hydroxyethyl)-4-methylthiazole + ATP = 4-methyl-5-(2-phosphooxyethyl)-thiazole + ADP + H(+). It functions in the pathway cofactor biosynthesis; thiamine diphosphate biosynthesis; 4-methyl-5-(2-phosphoethyl)-thiazole from 5-(2-hydroxyethyl)-4-methylthiazole: step 1/1. Functionally, catalyzes the phosphorylation of the hydroxyl group of 4-methyl-5-beta-hydroxyethylthiazole (THZ). The chain is Hydroxyethylthiazole kinase from Carboxydothermus hydrogenoformans (strain ATCC BAA-161 / DSM 6008 / Z-2901).